The chain runs to 368 residues: 3-dehydroquinate synthase (368 aa).

NAD(+) is bound by residues 131-132 (TT), K144, and K153. Zn(2+) contacts are provided by E186, H249, and H267.

This sequence belongs to the sugar phosphate cyclases superfamily. Dehydroquinate synthase family. The cofactor is Co(2+). Zn(2+) is required as a cofactor. NAD(+) serves as cofactor.

It is found in the cytoplasm. It catalyses the reaction 7-phospho-2-dehydro-3-deoxy-D-arabino-heptonate = 3-dehydroquinate + phosphate. The protein operates within metabolic intermediate biosynthesis; chorismate biosynthesis; chorismate from D-erythrose 4-phosphate and phosphoenolpyruvate: step 2/7. Its function is as follows. Catalyzes the conversion of 3-deoxy-D-arabino-heptulosonate 7-phosphate (DAHP) to dehydroquinate (DHQ). The protein is 3-dehydroquinate synthase of Pelagibacter ubique (strain HTCC1062).